A 217-amino-acid chain; its full sequence is GTP cyclohydrolase 1 (217 aa).

Residues C109, H112, and C180 each coordinate Zn(2+).

This sequence belongs to the GTP cyclohydrolase I family. In terms of assembly, toroid-shaped homodecamer, composed of two pentamers of five dimers.

It catalyses the reaction GTP + H2O = 7,8-dihydroneopterin 3'-triphosphate + formate + H(+). Its pathway is cofactor biosynthesis; 7,8-dihydroneopterin triphosphate biosynthesis; 7,8-dihydroneopterin triphosphate from GTP: step 1/1. The chain is GTP cyclohydrolase 1 from Aliivibrio fischeri (strain ATCC 700601 / ES114) (Vibrio fischeri).